The primary structure comprises 444 residues: MGQAGCKGLCLSLFDYKTEKYVIAKNKKVGLLYRLLQASILAYLVVWVFLIKKGYQDVDTSLQSAVITKVKGVAFTNTSDLGQRIWDVADYVIPAQGENVFFVVTNLIVTPNQRQNVCAENEGIPDGACSKDSDCHAGEAVTAGNGVKTGRCLRRENLARGTCEIFAWCPLETSSRPEEPFLKEAEDFTIFIKNHIRFPKFNFSKSNVMDVKDRSFLKSCHFGPKNHYCPIFRLGSVIRWAGSDFQDIALEGGVIGINIEWNCDLDKAASECHPHYSFSRLDNKLSKSVSSGYNFRFARYYRDAAGVEFRTLMKAYGIRFDVMVNGKAGKFSIIPTIINVGSGVALMGAGAFFCDLVLIYLIKKREFYRDKKYEEVRGLEDSSQEAEDEASGLGLSEQLTSGPGLLGMPEQQELQEPPEAKRGSSSQKGNGSVCPQLLEPHRST.

Over methionine 1–glycine 30 the chain is Cytoplasmic. A helical membrane pass occupies residues leucine 31 to isoleucine 51. Residues lysine 52–arginine 319 lie on the Extracellular side of the membrane. Residue asparagine 77 is glycosylated (N-linked (GlcNAc...) asparagine). Intrachain disulfides connect cysteine 118–cysteine 169, cysteine 129–cysteine 152, and cysteine 135–cysteine 163. An N-linked (GlcNAc...) asparagine glycan is attached at asparagine 202. 2 disulfides stabilise this stretch: cysteine 220–cysteine 229 and cysteine 263–cysteine 272. A helical transmembrane segment spans residues phenylalanine 320 to isoleucine 362. Topologically, residues lysine 363–threonine 444 are cytoplasmic. The segment at glycine 378 to threonine 444 is disordered.

The protein belongs to the P2X receptor family. As to quaternary structure, functional P2XRs are organized as homomeric and heteromeric trimers. Homotrimer. Forms heterotrimer with P2RX1. In terms of tissue distribution, expressed at high levels in brain and immune system.

Its subcellular location is the cell membrane. The enzyme catalyses Na(+)(in) = Na(+)(out). It catalyses the reaction Ca(2+)(in) = Ca(2+)(out). The catalysed reaction is chloride(in) = chloride(out). With respect to regulation, activated by ATP. Slowly desensitizing. Sensitive to the ATP agonist alpha/beta-methylene-ATP. Functionally, ATP-gated nonselective transmembrane cation channel permeable to potassium, sodium and calcium. Unlike other P2RX receptors, the P2X5 receptor is also permeable to chloride. May play a supporting role in the inflammatory response. Non-functional. The sequence is that of P2X purinoceptor 5 from Homo sapiens (Human).